Consider the following 37-residue polypeptide: Mau operon transcriptional activator (37 aa).

The protein belongs to the LysR transcriptional regulatory family.

Functionally, transcriptional activator of the mau genes involved in methylamine metabolism. This is Mau operon transcriptional activator (mauR) from Paracoccus versutus (Thiobacillus versutus).